The sequence spans 181 residues: Nucleoside triphosphate/diphosphate phosphatase (181 aa).

Arginine 26 serves as the catalytic Proton donor. Asparagine 90, aspartate 106, aspartate 108, aspartate 110, aspartate 123, and glutamate 126 together coordinate Mg(2+).

Belongs to the Ntdp family. The cofactor is Mg(2+).

It carries out the reaction a ribonucleoside 5'-triphosphate + H2O = a ribonucleoside 5'-diphosphate + phosphate + H(+). It catalyses the reaction a ribonucleoside 5'-diphosphate + H2O = a ribonucleoside 5'-phosphate + phosphate + H(+). Its function is as follows. Has nucleoside phosphatase activity towards nucleoside triphosphates and nucleoside diphosphates. The polypeptide is Nucleoside triphosphate/diphosphate phosphatase (Ligilactobacillus salivarius (strain UCC118) (Lactobacillus salivarius)).